A 95-amino-acid chain; its full sequence is Large ribosomal subunit protein uL23 (95 aa).

The protein belongs to the universal ribosomal protein uL23 family. In terms of assembly, part of the 50S ribosomal subunit. Contacts protein L29, and trigger factor when it is bound to the ribosome.

Its function is as follows. One of the early assembly proteins it binds 23S rRNA. One of the proteins that surrounds the polypeptide exit tunnel on the outside of the ribosome. Forms the main docking site for trigger factor binding to the ribosome. In Thermodesulfovibrio yellowstonii (strain ATCC 51303 / DSM 11347 / YP87), this protein is Large ribosomal subunit protein uL23.